The primary structure comprises 249 residues: Aquaporin (249 aa).

The Cytoplasmic segment spans residues 1–11 (MTRKWIKKLQS). The chain crosses the membrane as a helical span at residues 12-32 (YIGEFFASFIFGFAVYTSIIG). Topologically, residues 33–39 (SAQTGQS) are extracellular. Residues 40 to 60 (AGPIIVALTIALSGVAIIYSF) form a helical membrane-spanning segment. The Cytoplasmic segment spans residues 61-83 (CDITVAHFNPAITFSAMCFRRLP). The short motif at 69–71 (NPA) is the NPA element. The chain crosses the membrane as a helical span at residues 84–104 (FFGGIFIIIFQVAGFIIAGLA). At 105–133 (SVAVLPGKYKNKLEIARPKRVADNVSRGR) the chain is on the extracellular side. Residues 134–154 (IFGTEFFLTAILVYVAFAVGV) form a helical membrane-spanning segment. Residues 155–179 (NPYTPPKDEHGDQLDPDEGLTEGRK) lie on the Cytoplasmic side of the membrane. The helical transmembrane segment at 180–200 (ITAPLAIGFTLGFCALLGIAS) threads the bilayer. At 201-223 (SGGAFNPGIVLSPMILTGTWDFW) the chain is on the extracellular side. Residues 206–208 (NPG) carry the NPG motif. Residues 224–246 (WVYLLGQFSGGLLGGGLQRFLLY) form a helical membrane-spanning segment. The Cytoplasmic segment spans residues 247-249 (KIF).

The protein belongs to the MIP/aquaporin (TC 1.A.8) family.

It is found in the cell membrane. Functionally, water channel required to facilitate the transport of water across membranes. Involved in osmotolerance. This chain is Aquaporin (AQP), found in Vairimorpha ceranae (strain BRL01) (Microsporidian parasite).